The following is a 498-amino-acid chain: ATP synthase subunit beta, chloroplastic (498 aa).

An ATP-binding site is contributed by 172 to 179; that stretch reads GGAGVGKT.

The protein belongs to the ATPase alpha/beta chains family. F-type ATPases have 2 components, CF(1) - the catalytic core - and CF(0) - the membrane proton channel. CF(1) has five subunits: alpha(3), beta(3), gamma(1), delta(1), epsilon(1). CF(0) has four main subunits: a(1), b(1), b'(1) and c(9-12).

It is found in the plastid. The protein resides in the chloroplast thylakoid membrane. It carries out the reaction ATP + H2O + 4 H(+)(in) = ADP + phosphate + 5 H(+)(out). Its function is as follows. Produces ATP from ADP in the presence of a proton gradient across the membrane. The catalytic sites are hosted primarily by the beta subunits. In Nicotiana bigelovii (Bigelov's tobacco), this protein is ATP synthase subunit beta, chloroplastic.